A 407-amino-acid polypeptide reads, in one-letter code: 12S rRNA N(4)-cytidine methyltransferase METTL15 (407 aa).

Residues 100–102 (GGH), aspartate 119, phenylalanine 146, aspartate 169, and glutamine 176 contribute to the S-adenosyl-L-methionine site. Phosphoserine is present on serine 358.

This sequence belongs to the methyltransferase superfamily. RsmH family.

Its subcellular location is the mitochondrion matrix. The enzyme catalyses cytidine(839) in 12S rRNA + S-adenosyl-L-methionine = N(4)-methylcytidine(839) in 12S rRNA + S-adenosyl-L-homocysteine + H(+). Functionally, N4-methylcytidine (m4C) methyltransferase responsible for the methylation of position C839 in mitochondrial 12S rRNA. Involved in the stabilization of 12S rRNA folding, therefore facilitating the assembly of the mitochondrial small ribosomal subunits. The polypeptide is 12S rRNA N(4)-cytidine methyltransferase METTL15 (METTL15) (Pongo abelii (Sumatran orangutan)).